The chain runs to 172 residues: 16S rRNA aminocarboxypropyltransferase (172 aa).

S-adenosyl-L-methionine is bound by residues Thr-21, Leu-71, Leu-93, and Thr-112.

The protein belongs to the TDD superfamily. TSR3 family.

The protein localises to the cytoplasm. It catalyses the reaction an N(1)-methylpseudouridine in rRNA + S-adenosyl-L-methionine = N(1)-methyl-N(3)-[(3S)-3-amino-3-carboxypropyl]pseudouridine in rRNA + S-methyl-5'-thioadenosine + H(+). Aminocarboxypropyltransferase that catalyzes the aminocarboxypropyl transfer on pseudouridine at position 914 in 16S rRNA. It constitutes the last step in biosynthesis of the hypermodified N1-methyl-N3-(3-amino-3-carboxypropyl) pseudouridine (m1acp3-Psi). The sequence is that of 16S rRNA aminocarboxypropyltransferase from Methanocaldococcus jannaschii (strain ATCC 43067 / DSM 2661 / JAL-1 / JCM 10045 / NBRC 100440) (Methanococcus jannaschii).